Reading from the N-terminus, the 275-residue chain is Voltage-dependent calcium channel gamma-5 subunit (275 aa).

The next 4 membrane-spanning stretches (helical) occupy residues 8–28 (ALTLLSSVFAVCGLGLLGIAV), 103–123 (FPLVSLFFMFIGFILSNIGHI), 129–149 (ILAFVSGIFFILSGLSLVVGL), and 181–201 (FAAISFLLTESAGVMSVYLFM).

This sequence belongs to the PMP-22/EMP/MP20 family. CACNG subfamily. The L-type calcium channel is composed of five subunits: alpha-1, alpha-2/delta, beta and gamma. Acts as an auxiliary subunit for AMPA-selective glutamate receptors (AMPARs). Found in a complex with GRIA1, GRIA2, GRIA3, GRIA4, CNIH2, CNIH3, CACNG2, CACNG3, CACNG4, CACNG7 and CACNG8. Interacts with GRIA1, GRIA2, GRIA3 and GRIA4.

The protein localises to the membrane. It is found in the postsynaptic density membrane. Its function is as follows. Regulates the gating properties of AMPA-selective glutamate receptors (AMPARs). Modulates their gating properties by accelerating their rates of activation, deactivation and desensitization. Displays subunit-specific AMPA receptor regulation. Shows specificity for GRIA1, GRIA4 and the long isoform of GRIA2. According to PubMed:18817736, shows only specificity for GRIA2 and specifically to the form of GRIA2 for which a single amino acid in the pore region has been edited from a glutamine to an arginine residue. Thought to stabilize the calcium channel in an inactivated (closed) state. The polypeptide is Voltage-dependent calcium channel gamma-5 subunit (Cacng5) (Rattus norvegicus (Rat)).